The sequence spans 39 residues: Protein MchX (39 aa).

Residues 15–37 traverse the membrane as a helical segment; that stretch reads SALSSTLLLSLIMSATLLEYSLS.

Its subcellular location is the cell inner membrane. Required for microcin H47 production. Possibly involved in a regulatory loop modulating its own expression and that of MchI and MchB. The chain is Protein MchX (mchX) from Escherichia coli.